The primary structure comprises 231 residues: Enolase-phosphatase E1 (231 aa).

This sequence belongs to the HAD-like hydrolase superfamily. MasA/MtnC family. In terms of assembly, monomer. Mg(2+) serves as cofactor.

It catalyses the reaction 5-methylsulfanyl-2,3-dioxopentyl phosphate + H2O = 1,2-dihydroxy-5-(methylsulfanyl)pent-1-en-3-one + phosphate. It participates in amino-acid biosynthesis; L-methionine biosynthesis via salvage pathway; L-methionine from S-methyl-5-thio-alpha-D-ribose 1-phosphate: step 3/6. The protein operates within amino-acid biosynthesis; L-methionine biosynthesis via salvage pathway; L-methionine from S-methyl-5-thio-alpha-D-ribose 1-phosphate: step 4/6. Functionally, bifunctional enzyme that catalyzes the enolization of 2,3-diketo-5-methylthiopentyl-1-phosphate (DK-MTP-1-P) into the intermediate 2-hydroxy-3-keto-5-methylthiopentenyl-1-phosphate (HK-MTPenyl-1-P), which is then dephosphorylated to form the acireductone 1,2-dihydroxy-3-keto-5-methylthiopentene (DHK-MTPene). This Stenotrophomonas maltophilia (strain R551-3) protein is Enolase-phosphatase E1.